The primary structure comprises 248 residues: mRNA-decapping protein OPG122 (248 aa).

The Nudix hydrolase domain maps to 45-227 (HKRVSVSAIL…IAKYALDTAK (183 aa)). The Nudix box motif lies at 126–147 (GIPKRGENVPECLSREIKEEVN). E132 serves as a coordination point for Mg(2+). E141 acts as the Nucleophile in catalysis. E145 provides a ligand contact to Mn(2+). A Mg(2+)-binding site is contributed by D167.

It belongs to the Nudix hydrolase family. It depends on Mg(2+) as a cofactor. Mn(2+) is required as a cofactor.

It localises to the host mitochondrion. Its function is as follows. Decapping enzyme that remove the protective 5'-cap from both host and viral mRNAs to commit transcripts for decay by the cellular exonuclease XRN1. Preferentially targets spliced mRNAs and since all viral genes are intronless, it preferentially targets host over viral transcripts. Acceleration of the turnover of cellular transcripts promotes the shutoff of host protein synthesis and therefore diminish the magnitude of antiviral response. The protein is mRNA-decapping protein OPG122 (OPG122) of Bos taurus (Bovine).